Here is a 150-residue protein sequence, read N- to C-terminus: Large ribosomal subunit protein uL13 (150 aa).

The protein belongs to the universal ribosomal protein uL13 family. As to quaternary structure, part of the 50S ribosomal subunit.

This protein is one of the early assembly proteins of the 50S ribosomal subunit, although it is not seen to bind rRNA by itself. It is important during the early stages of 50S assembly. This chain is Large ribosomal subunit protein uL13, found in Chlamydia muridarum (strain MoPn / Nigg).